The chain runs to 153 residues: Nucleoside diphosphate kinase (153 aa).

A2 carries the post-translational modification N-acetylalanine. ATP-binding residues include K13, F61, R89, T95, R106, and N116. Residue H119 is the Pros-phosphohistidine intermediate of the active site. S126 carries the post-translational modification Phosphoserine.

It belongs to the NDK family. As to quaternary structure, homohexamer. The cofactor is Mg(2+).

The protein resides in the cytoplasm. It localises to the cytoskeleton. The catalysed reaction is a 2'-deoxyribonucleoside 5'-diphosphate + ATP = a 2'-deoxyribonucleoside 5'-triphosphate + ADP. It carries out the reaction a ribonucleoside 5'-diphosphate + ATP = a ribonucleoside 5'-triphosphate + ADP. Functionally, major role in the synthesis of nucleoside triphosphates other than ATP. The ATP gamma phosphate is transferred to the NDP beta phosphate via a ping-pong mechanism, using a phosphorylated active-site intermediate. The sequence is that of Nucleoside diphosphate kinase (awd) from Drosophila melanogaster (Fruit fly).